Here is a 665-residue protein sequence, read N- to C-terminus: FAD-dependent oxidoreductase domain-containing protein 2 (665 aa).

The N-terminal stretch at 1–17 is a signal peptide; the sequence is MGPSGLLVALALHLAVC. N-linked (GlcNAc...) asparagine glycosylation occurs at N136. Positions 642–665 are disordered; the sequence is RWLGDHSTAPEPLTQSLDSNKEEL. The short motif at 662–665 is the Prevents secretion from ER element; the sequence is KEEL.

Belongs to the FOXRED2 family. Interacts with SEL1L. May interact with OS9 and DNAJC10. Interacts with TXNDC16. FAD serves as cofactor. Post-translationally, N-glycosylated.

Its subcellular location is the endoplasmic reticulum lumen. Its function is as follows. Probable flavoprotein which may function in endoplasmic reticulum associated degradation (ERAD). May bind non-native proteins in the endoplasmic reticulum and target them to the ubiquitination machinery for subsequent degradation. This Mus musculus (Mouse) protein is FAD-dependent oxidoreductase domain-containing protein 2.